The sequence spans 408 residues: Protein ZNF365 (408 aa).

Ser-16 bears the Phosphoserine mark. The segment at 26–51 (FRCPRCGDHTRFRSLSSLRAHLEFSH) adopts a C2H2-type; degenerate zinc-finger fold. 2 positions are modified to phosphoserine: Ser-139 and Ser-146. Positions 170–298 (VEAVDRTIEK…QLEYYQSQQA (129 aa)) form a coiled coil. At Thr-176 the chain carries Phosphothreonine. A Phosphoserine modification is found at Ser-370.

In terms of assembly, homodimers. Interacts with NDE1 and NDEL1. Interacts with DISC1. Interacts with PARP1. Interacts with MCRS1. Expressed in cerebral cortex, hippocampus, olfactory tubercle and striatum.

It is found in the cytoplasm. It localises to the cytoskeleton. The protein resides in the microtubule organizing center. Its subcellular location is the centrosome. Involved in the positive regulation of oligodendrocyte differentiation during postnatal growth. Involved in the morphogenesis of basket cells in the somatosensory cortex during embryogenesis. Involved in dendritic arborization, morphogenesis of spine density dendrite, and establishment of postsynaptic dendrite density in cortical pyramidal neurons. Involved in the regulation of neurogenesis. Negatively regulates neurite outgrowth. Involved in homologous recombination (HR) repair pathway. Required for proper resolution of DNA double-strand breaks (DSBs) by HR. Is required for recovery of stalled replication forks, and directly contributes to genomic stability. Interacts with PARP1 and mediates MRE11-dependent DNA end resection during replication fork recovery. Contributes to genomic stability by preventing telomere dysfunction. The polypeptide is Protein ZNF365 (Znf365) (Rattus norvegicus (Rat)).